A 113-amino-acid polypeptide reads, in one-letter code: Hydrogenase maturation factor HypA (113 aa).

Residue His2 participates in Ni(2+) binding. The Zn(2+) site is built by Cys73, Cys76, Cys89, and Cys92.

It belongs to the HypA/HybF family.

Its function is as follows. Involved in the maturation of [NiFe] hydrogenases. Required for nickel insertion into the metal center of the hydrogenase. This Chlorobaculum tepidum (strain ATCC 49652 / DSM 12025 / NBRC 103806 / TLS) (Chlorobium tepidum) protein is Hydrogenase maturation factor HypA.